The chain runs to 211 residues: Protein-methionine-sulfoxide reductase heme-binding subunit MsrQ (211 aa).

Helical transmembrane passes span 17–37 (LAGLLPFLWLVWAINHGGLGA), 54–74 (FLLATLLITPLARYVKQPLLI), 82–102 (LWCFAWATLHLTSYALLELGV), 116–136 (PYLTLGIISWVILLALAFTST), and 153–173 (FVYLVAILAPIHYLWSVKIIS).

This sequence belongs to the MsrQ family. As to quaternary structure, heterodimer of a catalytic subunit (MsrP) and a heme-binding subunit (MsrQ). It depends on FMN as a cofactor. Requires heme b as cofactor.

It localises to the cell inner membrane. Part of the MsrPQ system that repairs oxidized periplasmic proteins containing methionine sulfoxide residues (Met-O), using respiratory chain electrons. Thus protects these proteins from oxidative-stress damage caused by reactive species of oxygen and chlorine generated by the host defense mechanisms. MsrPQ is essential for the maintenance of envelope integrity under bleach stress, rescuing a wide series of structurally unrelated periplasmic proteins from methionine oxidation, including the primary periplasmic chaperone SurA and the lipoprotein Pal. MsrQ provides electrons for reduction to the reductase catalytic subunit MsrP, using the quinone pool of the respiratory chain. This chain is Protein-methionine-sulfoxide reductase heme-binding subunit MsrQ, found in Escherichia coli (strain SMS-3-5 / SECEC).